A 160-amino-acid polypeptide reads, in one-letter code: MRKKRNKNLYGEVYALGQHISMSAHKARRVIDQIRGRSYEETLMILELMPYRACYPIFKLVYSAAANASHNMGFNEASLVISKAEVNEGTTMKKLKPRARGRSYAIKRPTCHIRIVLKDKSFYEEENFFCLKQSEWKKKKKYTDMTYHYMDKGGGLWDKK.

It belongs to the universal ribosomal protein uL22 family. As to quaternary structure, part of the 50S ribosomal subunit.

The protein localises to the plastid. The protein resides in the chloroplast. This protein binds specifically to 23S rRNA. Functionally, the globular domain of the protein is located near the polypeptide exit tunnel on the outside of the subunit, while an extended beta-hairpin is found that lines the wall of the exit tunnel in the center of the 70S ribosome. The chain is Large ribosomal subunit protein uL22c (rpl22) from Eucalyptus globulus subsp. globulus (Tasmanian blue gum).